We begin with the raw amino-acid sequence, 765 residues long: Glycine--tRNA ligase (765 aa).

The transit peptide at 1 to 87 directs the protein to the mitochondrion; it reads MSLQLLKALP…LRSAAAEFIM (87 aa). A disordered region spans residues 41–73; it reads TTTKPTPSAPPPPPPTQPQQPAATTSWGTKKQN. The span at 47-58 shows a compositional bias: pro residues; the sequence is PSAPPPPPPTQP. Residues 95–151 enclose the WHEP-TRS domain; that stretch reads QLAPLRERVQEQGNLVRDLKAKGAPEIDVKKAVAELKARKKLLEDKELALTPSVVSF. Glu-331 provides a ligand contact to glycine. Residues 363 to 365 and 374 to 375 contribute to the ATP site; these read RNE and RV. A glycine-binding site is contributed by Glu-382. 489–490 contributes to the ATP binding site; sequence EC. Glycine is bound at residue 609–611; that stretch reads EPS. Residue Arg-616 coordinates ATP.

It belongs to the class-II aminoacyl-tRNA synthetase family. As to quaternary structure, homodimer.

The protein localises to the mitochondrion. It localises to the cytoplasm. Its subcellular location is the cell projection. The protein resides in the axon. It carries out the reaction 2 ATP + H(+) = P(1),P(4)-bis(5'-adenosyl) tetraphosphate + diphosphate. The catalysed reaction is tRNA(Gly) + glycine + ATP = glycyl-tRNA(Gly) + AMP + diphosphate. Functionally, catalyzes the ATP-dependent ligation of glycine to the 3'-end of its cognate tRNA, via the formation of an aminoacyl-adenylate intermediate (Gly-AMP). Also produces diadenosine tetraphosphate (Ap4A), a universal pleiotropic signaling molecule needed for cell regulation pathways, by direct condensation of 2 ATPs. Thereby, may play a special role in Ap4A homeostasis. Required for terminal arborization of both dendrites and axons during development. This is Glycine--tRNA ligase from Drosophila melanogaster (Fruit fly).